The chain runs to 193 residues: AP-3 complex subunit sigma-2 (193 aa).

This sequence belongs to the adaptor complexes small subunit family. In terms of assembly, adaptor protein complex 3 (AP-3) is a heterotetramer composed of two large adaptins (delta-type subunit AP3D1 and beta-type subunit AP3B1 or AP3B2), a medium adaptin (mu-type subunit AP3M1 or AP3M2) and a small adaptin (sigma-type subunit APS1 or AP3S2). Interacts with AGAP1. AP-3 associates with the BLOC-1 complex. As to expression, present in all adult tissues examined.

It localises to the golgi apparatus. The protein resides in the cytoplasmic vesicle membrane. Its function is as follows. Part of the AP-3 complex, an adaptor-related complex which is not clathrin-associated. The complex is associated with the Golgi region as well as more peripheral structures. It facilitates the budding of vesicles from the Golgi membrane and may be directly involved in trafficking to lysosomes. In concert with the BLOC-1 complex, AP-3 is required to target cargos into vesicles assembled at cell bodies for delivery into neurites and nerve terminals. This is AP-3 complex subunit sigma-2 (AP3S2) from Homo sapiens (Human).